Consider the following 206-residue polypeptide: Small ribosomal subunit protein uS4 (206 aa).

Residues 96 to 158 (SRLDNVVYRM…AKKQLRIQNA (63 aa)) form the S4 RNA-binding domain.

Belongs to the universal ribosomal protein uS4 family. As to quaternary structure, part of the 30S ribosomal subunit. Contacts protein S5. The interaction surface between S4 and S5 is involved in control of translational fidelity.

Functionally, one of the primary rRNA binding proteins, it binds directly to 16S rRNA where it nucleates assembly of the body of the 30S subunit. Its function is as follows. With S5 and S12 plays an important role in translational accuracy. This Francisella tularensis subsp. tularensis (strain FSC 198) protein is Small ribosomal subunit protein uS4.